Reading from the N-terminus, the 1912-residue chain is Receptor-type tyrosine-protein phosphatase delta (1912 aa).

An N-terminal signal peptide occupies residues 1–20 (MVPVARPLSLLLTFFLCACA). The Extracellular segment spans residues 21-1266 (ETPPRFTRTP…PQPITDEEEG (1246 aa)). 2 consecutive Ig-like C2-type domains span residues 24 to 114 (PRFT…TRLT) and 126 to 224 (PTID…ANLY). 2 disulfides stabilise this stretch: cysteine 45/cysteine 98 and cysteine 147/cysteine 207. The mini-exon peptide A9; sufficient for interaction with IL1RAPL1 stretch occupies residues 181–189 (ESIGGTPIR). The mini-exon peptide B; required for interaction with SLITRK2 and in the function in pre-synaptic differentiation; Acts as an adjustable linker to control relative positions and orientations of the PTPRD second and third immunoglobilin domains for their simultaneous interactions with the first immunoglobilin domain of IL1RAPL1 and IL1RAP; Modulates affinity for IL1RAPL1 and IL1RAP stretch occupies residues 227-230 (ELRE). Residues 236–318 (PRFSIPPTNH…GVIEAIAQIT (83 aa)) enclose the Ig-like C2-type 3 domain. 2 N-linked (GlcNAc...) asparagine glycosylation sites follow: asparagine 254 and asparagine 299. A disulfide bond links cysteine 257 and cysteine 302. 8 consecutive Fibronectin type-III domains span residues 325-415 (PPGT…TSEQ), 420-516 (APRD…TGVP), 518-607 (QPLN…TMQS), 612-709 (PPQD…TDED), 714-822 (PPRK…TTGA), 823-916 (VPGK…VPEE), 921-1016 (FPQN…TLPV), and 1020-1106 (FAKN…TAPD). 2 N-linked (GlcNAc...) asparagine glycosylation sites follow: asparagine 724 and asparagine 832. The chain crosses the membrane as a helical span at residues 1267 to 1287 (LIWVVGPVLAVVFIICIVIAI). Topologically, residues 1288-1912 (LLYKRKRAES…YLGSFDHYAT (625 aa)) are cytoplasmic. Residues 1298–1319 (ESRKSSLPNSKEVPSHHPTDPV) form a disordered region. Over residues 1310–1319 (VPSHHPTDPV) the composition is skewed to basic and acidic residues. 2 consecutive Tyrosine-protein phosphatase domains span residues 1357–1612 (FSQE…LLEA) and 1644–1903 (MELE…ALEY). Residues aspartate 1521, 1553 to 1559 (CSAGVGR), and glutamine 1597 each bind substrate. Residue cysteine 1553 is the Phosphocysteine intermediate of the active site. Residue cysteine 1844 is the Phosphocysteine intermediate of the active site.

The protein belongs to the protein-tyrosine phosphatase family. Receptor class 2A subfamily. In terms of assembly, interacts with PPFIA1, PPFIA2 and PPFIA3. Interacts (via extracellular domain) with SLITRK4 (via LRR 1 and 2 repeats). Interacts with SLITRK2; induces presynaptic differentiation. Interacts (via the second immunoglobilin domain) with IL1RAPL1 (via the first immunoglobilin domain); induces pre- and postsynaptic differentiation of neurons and synapse formation. Isoform G, isoform H, isoform I, isoform J, and isoform K do not interact with IL1RAPL1. Interacts (via the third immunoglobilin domain) with IL1RAP (via the first immunoglobilin domain); induces pre- and postsynaptic differentiation of neurons. Post-translationally, a cleavage occurs, separating the extracellular domain from the transmembrane segment. This process called 'ectodomain shedding' is thought to be involved in receptor desensitization, signal transduction and/or membrane localization. Brain, kidney, heart, and some B-cell lines.

The protein resides in the membrane. It carries out the reaction O-phospho-L-tyrosyl-[protein] + H2O = L-tyrosyl-[protein] + phosphate. Functionally, can bidirectionally induce pre- and post-synaptic differentiation of neurons by mediating interaction with IL1RAP and IL1RAPL1 trans-synaptically. Involved in pre-synaptic differentiation through interaction with SLITRK2. The polypeptide is Receptor-type tyrosine-protein phosphatase delta (Ptprd) (Mus musculus (Mouse)).